The primary structure comprises 729 residues: Anti-bacteriophage protein B (729 aa).

Residues 109 to 271 (FDLLKSGQNV…KLGYPHTFVS (163 aa)) enclose the Helicase ATP-binding domain. 122–129 (APTSMGKS) is a binding site for ATP. The Helicase C-terminal domain maps to 297–472 (ALGEIAHACV…GIDTPINLLA (176 aa)).

Belongs to the helicase family. As to quaternary structure, interacts with AbpB.

Its function is as follows. Part of an antiviral system composed of AbpA and AbpB; when both are expressed from a plasmid they confer resistance to phages T2, T4, T7 and lambda but not RB32 or RB69. Resistance is temperature dependent, it can be seen at 30 degrees Celsius but not at 37 or 42 degrees Celsius. The system impairs phage but not bacterial DNA synthesis (shown for T4, T7 and lambda). Partially suppressed by mutations in T4 gene 41, a replicative helicase. In terms of biological role, deletion or mutations in this gene were selected in directed evolution experiments for resistance to intense ionizing radiation (3000 Gy). This is Anti-bacteriophage protein B from Escherichia coli (strain K12).